We begin with the raw amino-acid sequence, 552 residues long: Chaperonin GroEL (552 aa).

ATP-binding positions include 30 to 33 (TLGP), Lys51, 87 to 91 (DGTTT), Gly415, and Asp496.

The protein belongs to the chaperonin (HSP60) family. In terms of assembly, forms a cylinder of 14 subunits composed of two heptameric rings stacked back-to-back. Interacts with the co-chaperonin GroES.

Its subcellular location is the cytoplasm. The catalysed reaction is ATP + H2O + a folded polypeptide = ADP + phosphate + an unfolded polypeptide.. Together with its co-chaperonin GroES, plays an essential role in assisting protein folding. The GroEL-GroES system forms a nano-cage that allows encapsulation of the non-native substrate proteins and provides a physical environment optimized to promote and accelerate protein folding. The protein is Chaperonin GroEL of Paramagnetospirillum magneticum (strain ATCC 700264 / AMB-1) (Magnetospirillum magneticum).